Reading from the N-terminus, the 287-residue chain is Hydroxysteroid 11-beta-dehydrogenase 1-like protein (287 aa).

The first 22 residues, 1–22 (MKLYAKLLLCSICVAFIAVRWS), serve as a signal peptide directing secretion. NADP(+)-binding positions include 40–66 (GASTGIGEQLAYHYARLGAQIVITARR), 91–92 (DM), and 118–120 (NHI). Residue Ser-169 coordinates substrate. The active-site Proton acceptor is the Tyr-182. Residues 182–186 (YASTK) and 215–221 (GLIDTDS) contribute to the NADP(+) site.

This sequence belongs to the short-chain dehydrogenases/reductases (SDR) family.

Its subcellular location is the secreted. The enzyme catalyses cortisone + NADPH + H(+) = cortisol + NADP(+). Its function is as follows. Unidirectional NADP(+)-dependent cortisol dehydrogenase (in vitro). The sequence is that of Hydroxysteroid 11-beta-dehydrogenase 1-like protein (hsd11b1l) from Danio rerio (Zebrafish).